The following is a 194-amino-acid chain: Imidazoleglycerol-phosphate dehydratase (194 aa).

The protein belongs to the imidazoleglycerol-phosphate dehydratase family.

Its subcellular location is the cytoplasm. The enzyme catalyses D-erythro-1-(imidazol-4-yl)glycerol 3-phosphate = 3-(imidazol-4-yl)-2-oxopropyl phosphate + H2O. It functions in the pathway amino-acid biosynthesis; L-histidine biosynthesis; L-histidine from 5-phospho-alpha-D-ribose 1-diphosphate: step 6/9. This chain is Imidazoleglycerol-phosphate dehydratase, found in Streptococcus gordonii (strain Challis / ATCC 35105 / BCRC 15272 / CH1 / DL1 / V288).